The chain runs to 158 residues: Crossover junction endodeoxyribonuclease RuvC (158 aa).

Catalysis depends on residues Asp-7, Glu-66, and Asp-139. Residues Asp-7, Glu-66, and Asp-139 each coordinate Mg(2+).

It belongs to the RuvC family. As to quaternary structure, homodimer which binds Holliday junction (HJ) DNA. The HJ becomes 2-fold symmetrical on binding to RuvC with unstacked arms; it has a different conformation from HJ DNA in complex with RuvA. In the full resolvosome a probable DNA-RuvA(4)-RuvB(12)-RuvC(2) complex forms which resolves the HJ. The cofactor is Mg(2+).

It localises to the cytoplasm. It catalyses the reaction Endonucleolytic cleavage at a junction such as a reciprocal single-stranded crossover between two homologous DNA duplexes (Holliday junction).. In terms of biological role, the RuvA-RuvB-RuvC complex processes Holliday junction (HJ) DNA during genetic recombination and DNA repair. Endonuclease that resolves HJ intermediates. Cleaves cruciform DNA by making single-stranded nicks across the HJ at symmetrical positions within the homologous arms, yielding a 5'-phosphate and a 3'-hydroxyl group; requires a central core of homology in the junction. The consensus cleavage sequence is 5'-(A/T)TT(C/G)-3'. Cleavage occurs on the 3'-side of the TT dinucleotide at the point of strand exchange. HJ branch migration catalyzed by RuvA-RuvB allows RuvC to scan DNA until it finds its consensus sequence, where it cleaves and resolves the cruciform DNA. The sequence is that of Crossover junction endodeoxyribonuclease RuvC from Carboxydothermus hydrogenoformans (strain ATCC BAA-161 / DSM 6008 / Z-2901).